The following is a 341-amino-acid chain: Glycerol-3-phosphate dehydrogenase [NAD(P)+] (341 aa).

NADPH contacts are provided by Ser-14, Phe-15, Arg-35, and Lys-108. Sn-glycerol 3-phosphate is bound by residues Lys-108 and Gly-136. Residue Ala-140 participates in NADPH binding. Residues Lys-191, Asp-244, Ser-254, Arg-255, and Asn-256 each coordinate sn-glycerol 3-phosphate. Lys-191 (proton acceptor) is an active-site residue. NADPH is bound at residue Arg-255. NADPH contacts are provided by Val-279 and Glu-281.

The protein belongs to the NAD-dependent glycerol-3-phosphate dehydrogenase family.

The protein localises to the cytoplasm. The enzyme catalyses sn-glycerol 3-phosphate + NAD(+) = dihydroxyacetone phosphate + NADH + H(+). The catalysed reaction is sn-glycerol 3-phosphate + NADP(+) = dihydroxyacetone phosphate + NADPH + H(+). The protein operates within membrane lipid metabolism; glycerophospholipid metabolism. Functionally, catalyzes the reduction of the glycolytic intermediate dihydroxyacetone phosphate (DHAP) to sn-glycerol 3-phosphate (G3P), the key precursor for phospholipid synthesis. The protein is Glycerol-3-phosphate dehydrogenase [NAD(P)+] of Pseudomonas putida (strain ATCC 700007 / DSM 6899 / JCM 31910 / BCRC 17059 / LMG 24140 / F1).